Here is an 848-residue protein sequence, read N- to C-terminus: Leucine--tRNA ligase (848 aa).

Residues proline 41–histidine 51 carry the 'HIGH' region motif. Residues lysine 619 to serine 623 carry the 'KMSKS' region motif. Lysine 622 contacts ATP.

The protein belongs to the class-I aminoacyl-tRNA synthetase family.

The protein resides in the cytoplasm. It carries out the reaction tRNA(Leu) + L-leucine + ATP = L-leucyl-tRNA(Leu) + AMP + diphosphate. The polypeptide is Leucine--tRNA ligase (Roseobacter denitrificans (strain ATCC 33942 / OCh 114) (Erythrobacter sp. (strain OCh 114))).